The chain runs to 95 residues: Aspartyl/glutamyl-tRNA(Asn/Gln) amidotransferase subunit C (95 aa).

This sequence belongs to the GatC family. As to quaternary structure, heterotrimer of A, B and C subunits.

The catalysed reaction is L-glutamyl-tRNA(Gln) + L-glutamine + ATP + H2O = L-glutaminyl-tRNA(Gln) + L-glutamate + ADP + phosphate + H(+). It catalyses the reaction L-aspartyl-tRNA(Asn) + L-glutamine + ATP + H2O = L-asparaginyl-tRNA(Asn) + L-glutamate + ADP + phosphate + 2 H(+). Its function is as follows. Allows the formation of correctly charged Asn-tRNA(Asn) or Gln-tRNA(Gln) through the transamidation of misacylated Asp-tRNA(Asn) or Glu-tRNA(Gln) in organisms which lack either or both of asparaginyl-tRNA or glutaminyl-tRNA synthetases. The reaction takes place in the presence of glutamine and ATP through an activated phospho-Asp-tRNA(Asn) or phospho-Glu-tRNA(Gln). This chain is Aspartyl/glutamyl-tRNA(Asn/Gln) amidotransferase subunit C, found in Azotobacter vinelandii (strain DJ / ATCC BAA-1303).